Reading from the N-terminus, the 167-residue chain is Large ribosomal subunit protein uL5 (167 aa).

The protein belongs to the universal ribosomal protein uL5 family. As to quaternary structure, part of the 50S ribosomal subunit; contacts the 5S rRNA and probably tRNA. Forms a bridge to the 30S subunit in the 70S ribosome.

In terms of biological role, this is one of the proteins that bind and probably mediate the attachment of the 5S RNA into the large ribosomal subunit, where it forms part of the central protuberance. In the 70S ribosome it contacts protein S13 of the 30S subunit (bridge B1b), connecting the 2 subunits; this bridge is implicated in subunit movement. May contact the P site tRNA; the 5S rRNA and some of its associated proteins might help stabilize positioning of ribosome-bound tRNAs. The sequence is that of Large ribosomal subunit protein uL5 from Methanoculleus marisnigri (strain ATCC 35101 / DSM 1498 / JR1).